The chain runs to 295 residues: Nitrogenase iron protein 1 (295 aa).

12-19 (GKGGIGKS) provides a ligand contact to ATP. Cysteine 100 provides a ligand contact to [4Fe-4S] cluster. Arginine 103 is modified (ADP-ribosylarginine; by dinitrogenase reductase ADP-ribosyltransferase). Cysteine 134 contacts [4Fe-4S] cluster.

It belongs to the NifH/BchL/ChlL family. Homodimer. It depends on [4Fe-4S] cluster as a cofactor. Post-translationally, the reversible ADP-ribosylation of Arg-103 inactivates the nitrogenase reductase and regulates nitrogenase activity.

The enzyme catalyses N2 + 8 reduced [2Fe-2S]-[ferredoxin] + 16 ATP + 16 H2O = H2 + 8 oxidized [2Fe-2S]-[ferredoxin] + 2 NH4(+) + 16 ADP + 16 phosphate + 6 H(+). In terms of biological role, the key enzymatic reactions in nitrogen fixation are catalyzed by the nitrogenase complex, which has 2 components: the iron protein and the molybdenum-iron protein. This chain is Nitrogenase iron protein 1 (nifH1), found in Mastigocladus laminosus (Fischerella sp.).